The sequence spans 719 residues: MPVRFKGLSEYQRNFLWKKSYLSESYNPSVGQKYTWAGLRSDQLGITKEPSFISKRRVPYYDPQISKYLEWNGTVRENDALAPPEPQIIRTPKPQEAEQREDANHETVLPQEASRVPKRTRSHSADSRAEGASDGVEKHQDVTKNHSLVNADVELRPSTKPLPESIEPRLDRHLRKKAGLAVVPLNNALRNSEYQRQFVWKTCKETAPVCAANQVFRNKSQVIPQFQGNTFIHESEYKRNFKGLTPVKEPKLREYLKGNSSFEILSPEKKADEPLDLEVDMASEDSDQPIKKPAPWRHQRLGKVNSEYRAKFLSPAQYLYKAGAWTRVKESLSHQGSLNAMWYAEVKELREKAESYRKRVQGTHFSRDHLNQIMSDSNCCWDVSSVASSEGTISSNIQALDLAGDLTSHRTLQKHPPTKLEEKKVALAEQPLENTIRSLELPEAPTMARRKLAWDAAEGTQKEDTQEEPSGEEDGREARGKDKQVCAGELQKVDMQTSKADGPTEGSETSSVSSGKGGRLPTPRLRELGIQRTHHDLTTPAVGGAVLVSPAKAKPSALEQRRRPSSQDGLETLKKGITKKGKHRPLSLLTSPTAGMKTVDPLPLRQDCDANVLRVAEGTLPVLKNLDHQTNTPGQPSPCTLPYCHPSSRIQGRLRDPEFQHNIGKPRMNNTQLLPHGAFNDEDADRLSEISARSAVSSLQAFQTLARAQKRKENFWGKP.

An ST]-E-Y-X(3)-F motif 1; required for efficient microtubule binding and stabilization motif is present at residues 9–15; it reads SEYQRNF. Positions 78 to 165 are disordered; that stretch reads NDALAPPEPQ…RPSTKPLPES (88 aa). Basic and acidic residues-rich tracts occupy residues 93–105 and 123–144; these read KPQE…DANH and HSAD…DVTK. Residues Ser124 and Ser127 each carry the phosphoserine modification. The ST]-E-Y-X(3)-F motif 2; required for efficient microtubule binding and stabilization signature appears at 192–198; sequence SEYQRQF. The ST]-E-Y-X(3)-F motif 3; required for efficient microtubule binding and stabilization signature appears at 235 to 241; sequence SEYKRNF. A phosphoserine mark is found at Ser266, Ser283, and Ser286. An ST]-E-Y-X(3)-F motif 4; required for efficient microtubule binding and stabilization motif is present at residues 306–312; it reads SEYRAKF. Phosphoserine is present on Ser314. A coiled-coil region spans residues 339–364; the sequence is NAMWYAEVKELREKAESYRKRVQGTH. Positions 453-523 are disordered; sequence AWDAAEGTQK…SGKGGRLPTP (71 aa). Over residues 465–475 the composition is skewed to acidic residues; it reads TQEEPSGEEDG. Positions 503 to 514 are enriched in low complexity; the sequence is PTEGSETSSVSS. Residues Ser565, Ser566, and Ser591 each carry the phosphoserine modification.

Belongs to the MDM1 family.

The protein resides in the nucleus. The protein localises to the cytoplasm. It localises to the cytoskeleton. It is found in the microtubule organizing center. Its subcellular location is the centrosome. The protein resides in the centriole. Functionally, microtubule-binding protein that negatively regulates centriole duplication. Binds to and stabilizes microtubules. This is Nuclear protein MDM1 (Mdm1) from Rattus norvegicus (Rat).